The following is a 307-amino-acid chain: N-acetylmuramic acid 6-phosphate etherase (307 aa).

Positions 57-220 constitute an SIS domain; sequence IIEAFKTNGR…TTASMIGVGK (164 aa). The Proton donor role is filled by glutamate 85. Glutamate 116 is an active-site residue.

This sequence belongs to the GCKR-like family. MurNAc-6-P etherase subfamily. As to quaternary structure, homodimer.

The catalysed reaction is N-acetyl-D-muramate 6-phosphate + H2O = N-acetyl-D-glucosamine 6-phosphate + (R)-lactate. It functions in the pathway amino-sugar metabolism; N-acetylmuramate degradation. Specifically catalyzes the cleavage of the D-lactyl ether substituent of MurNAc 6-phosphate, producing GlcNAc 6-phosphate and D-lactate. The protein is N-acetylmuramic acid 6-phosphate etherase of Alkaliphilus metalliredigens (strain QYMF).